The sequence spans 1700 residues: Rho guanine nucleotide exchange factor 28 (1700 aa).

The interval 288–343 is disordered; that stretch reads TEKATMPSGAAETEEEVRNLESGRSPSEEEEDAKSIKSQVDGPSEHEDQDRLPLDR. A phosphoserine mark is found at S312 and S314. Over residues 330 to 343 the composition is skewed to basic and acidic residues; that stretch reads PSEHEDQDRLPLDR. A Phosphoserine modification is found at S478. The interval 483-532 is disordered; that stretch reads VADSEGEGGSEPPICYAVGSQSSPRTGLPSGDELDSFETNTEPDCNISRT. S623 bears the Phosphoserine mark. The segment at 651-698 adopts a Phorbol-ester/DAG-type zinc-finger fold; sequence RHQFVPGTFSGVLQCSGCDKTLLGKESLQCANCKANTHKGCKDAVPPC. One can recognise a DH domain in the interval 846-1041; that stretch reads KRQDVIFELM…KDMIAAVDLK (196 aa). The region spanning 1095 to 1184 is the PH domain; that stretch reads ATGRFKDILA…NWMRRIQQAV (90 aa). 2 disordered regions span residues 1184–1205 and 1289–1328; these read VESC…RRKA and KMGD…TEGT. Positions 1191-1205 are enriched in basic and acidic residues; the sequence is EGGRTSESDEERRKA. Residues 1292 to 1301 form an interaction with PTK2/FAK1; required for regulation of axonal branching and synapse formation region; sequence DVSQSSEESP. Over residues 1309–1325 the composition is skewed to polar residues; sequence TPSTQDVPASPTASLVT. The mediates cytoplasmic retention and interaction with YWHAH stretch occupies residues 1369–1380; the sequence is IIQAIQNLTRLL. A coiled-coil region spans residues 1421-1522; sequence QEKSRYLEKQ…RERQKMRVQQ (102 aa). The interaction with microtubules stretch occupies residues 1421–1700; it reads QEKSRYLEKQ…DGAEENILYL (280 aa). The segment at 1493-1524 is RNA-binding; that stretch reads QLQEYQQSLERLREGQRMVERERQKMRVQQGL. A Phosphoserine modification is found at S1535. The segment at 1563-1576 is mediates cytoplasmic retention and interaction with MAPK8IP1; sequence FINEAFGHMSLNTS. The tract at residues 1602–1700 is disordered; it reads SESPTELKID…DGAEENILYL (99 aa). Residue S1604 is modified to Phosphoserine. Over residues 1647 to 1663 the composition is skewed to low complexity; it reads DLDSFQSESSSPQDSNQ. Over residues 1664–1675 the composition is skewed to polar residues; sequence RGPQPQTLTTEA.

Homooligomer; forms some cytoplasmic aggregates. Forms a complex with MAPK8 and MAPK8IP1. Interacts with RHOA. Interacts with microtubules. Interacts with YWHAE and YWHAH. Interacts with PTK2/FAK1. Interacts with NEFL. Interacts with CTNND2; prevents interaction with RHOA. Post-translationally, phosphorylated on tyrosine upon stimulation of cells by laminin. Highly enriched in the brain (at protein level). Also detected in lung and kidney.

The protein resides in the cytoplasm. Its subcellular location is the cell membrane. Functionally, functions as a RHOA-specific guanine nucleotide exchange factor regulating signaling pathways downstream of integrins and growth factor receptors. Functions in axonal branching, synapse formation and dendritic morphogenesis. Also functions in focal adhesion formation, cell motility and B-lymphocytes activation. May regulate NEFL expression and aggregation and play a role in apoptosis. The polypeptide is Rho guanine nucleotide exchange factor 28 (Arhgef28) (Mus musculus (Mouse)).